The sequence spans 82 residues: UPF0154 protein SMU_1719c (82 aa).

The helical transmembrane segment at 4-24 (FLWILLVIIALLAGLVGGTFI) threads the bilayer.

The protein belongs to the UPF0154 family.

The protein localises to the membrane. This chain is UPF0154 protein SMU_1719c, found in Streptococcus mutans serotype c (strain ATCC 700610 / UA159).